Here is a 299-residue protein sequence, read N- to C-terminus: Protoheme IX farnesyltransferase (299 aa).

9 consecutive transmembrane segments (helical) span residues 25–45 (VVVL…RAGV), 47–67 (WTVL…AAAV), 95–115 (LAAL…LLTF), 119–139 (LAAW…TGFL), 147–167 (IVIG…AVSG), 173–193 (PLLL…ALAI), 218–238 (LHIL…YAIH), 243–263 (LYLL…WALY), and 279–299 (IRYL…PLTL).

Belongs to the UbiA prenyltransferase family. Protoheme IX farnesyltransferase subfamily.

It localises to the cell inner membrane. The enzyme catalyses heme b + (2E,6E)-farnesyl diphosphate + H2O = Fe(II)-heme o + diphosphate. The protein operates within porphyrin-containing compound metabolism; heme O biosynthesis; heme O from protoheme: step 1/1. Functionally, converts heme B (protoheme IX) to heme O by substitution of the vinyl group on carbon 2 of heme B porphyrin ring with a hydroxyethyl farnesyl side group. This Azotobacter vinelandii (strain DJ / ATCC BAA-1303) protein is Protoheme IX farnesyltransferase.